A 75-amino-acid polypeptide reads, in one-letter code: uncharacterized protein (75 aa).

One can recognise a SpoVT-AbrB domain in the interval 3 to 45 (TTVFLSNRSQAVRLPKAVALPENVKRVEVIAVGRTRIITPAGE).

Belongs to the VapB family.

This is an uncharacterized protein from Escherichia coli (strain K12).